We begin with the raw amino-acid sequence, 483 residues long: MKSAIPSLMVQGTTSDAGKSVLVAGLCRVLARKGINVAPFKPQNMALNSAVTKDGGEIGRAQAVQAQACNIEPTVHMNPVLIKPNSDTGAQIILQGKALSNMDAASFHDYKKVAMNTVLDSFSKLTKEFDSIMIEGAGSPAEINLREGDIANMGFAEAADVPVIIVADIDRGGVFAHLYGTLALLSESEQTRVKGFVINRFRGDIRLLQSGLDWLEEKTGKPVLGVLPYLHGLNLEAEDAITAQQELNSEVKLNVVVPVLTRISNHTDFDVLRLNPDINLSYVGKGEKIDKADLIILPGTKSVRDDLAYLKSQGWDKDILRHIRLGGKVMGICGGYQMLGKTIDDPDGVEGEPGSSEGLGLLNVHTVLTGSKQLTKTEAVLNLNNQKAKVKGYEIHVGRSQVLDEQPLELDNGECDGAISECGQIMGTYLHGFFDEAEALNLITEWVNGTQVKQQDFEVLKEQGINRIADAIEQHMNLDFLFK.

The GATase cobBQ-type domain maps to 252-439; that stretch reads KLNVVVPVLT…LHGFFDEAEA (188 aa). Residue cysteine 333 is the Nucleophile of the active site. Histidine 431 is an active-site residue.

The protein belongs to the CobB/CobQ family. CobQ subfamily.

The protein operates within cofactor biosynthesis; adenosylcobalamin biosynthesis. In terms of biological role, catalyzes amidations at positions B, D, E, and G on adenosylcobyrinic A,C-diamide. NH(2) groups are provided by glutamine, and one molecule of ATP is hydrogenolyzed for each amidation. This Vibrio parahaemolyticus serotype O3:K6 (strain RIMD 2210633) protein is Cobyric acid synthase.